We begin with the raw amino-acid sequence, 1152 residues long: DNA-directed RNA polymerase subunit beta' (1152 aa).

The Zn(2+) site is built by Cys60, Cys62, Cys75, and Cys78. Residues Asp449, Asp451, and Asp453 each contribute to the Mg(2+) site. Positions 779, 853, 860, and 863 each coordinate Zn(2+).

The protein belongs to the RNA polymerase beta' chain family. The RNAP catalytic core consists of 2 alpha, 1 beta, 1 beta' and 1 omega subunit. When a sigma factor is associated with the core the holoenzyme is formed, which can initiate transcription. It depends on Mg(2+) as a cofactor. Requires Zn(2+) as cofactor.

The enzyme catalyses RNA(n) + a ribonucleoside 5'-triphosphate = RNA(n+1) + diphosphate. DNA-dependent RNA polymerase catalyzes the transcription of DNA into RNA using the four ribonucleoside triphosphates as substrates. This chain is DNA-directed RNA polymerase subunit beta', found in Carboxydothermus hydrogenoformans (strain ATCC BAA-161 / DSM 6008 / Z-2901).